A 301-amino-acid polypeptide reads, in one-letter code: Acetylglutamate kinase (301 aa).

Substrate-binding positions include 68–69 (GG), Arg90, and Asn195.

This sequence belongs to the acetylglutamate kinase family. ArgB subfamily.

The protein localises to the cytoplasm. It carries out the reaction N-acetyl-L-glutamate + ATP = N-acetyl-L-glutamyl 5-phosphate + ADP. Its pathway is amino-acid biosynthesis; L-arginine biosynthesis; N(2)-acetyl-L-ornithine from L-glutamate: step 2/4. Catalyzes the ATP-dependent phosphorylation of N-acetyl-L-glutamate. In Pseudomonas paraeruginosa (strain DSM 24068 / PA7) (Pseudomonas aeruginosa (strain PA7)), this protein is Acetylglutamate kinase.